We begin with the raw amino-acid sequence, 260 residues long: Putative serine protease 45 (260 aa).

One can recognise a Peptidase S1 domain in the interval methionine 1–serine 234. A disulfide bridge links cysteine 19 with cysteine 35. Histidine 34 serves as the catalytic Charge relay system. The N-linked (GlcNAc...) asparagine glycan is linked to asparagine 55. The Charge relay system role is filled by aspartate 82. Disulfide bonds link cysteine 116–cysteine 192, cysteine 151–cysteine 173, and cysteine 182–cysteine 210. Serine 186 (charge relay system) is an active-site residue.

The protein belongs to the peptidase S1 family.

The chain is Putative serine protease 45 from Homo sapiens (Human).